The chain runs to 95 residues: Protein TusB (95 aa).

It belongs to the DsrH/TusB family. As to quaternary structure, heterohexamer, formed by a dimer of trimers. The hexameric TusBCD complex contains 2 copies each of TusB, TusC and TusD. The TusBCD complex interacts with TusE.

It is found in the cytoplasm. Functionally, part of a sulfur-relay system required for 2-thiolation of 5-methylaminomethyl-2-thiouridine (mnm(5)s(2)U) at tRNA wobble positions. The polypeptide is Protein TusB (Photorhabdus laumondii subsp. laumondii (strain DSM 15139 / CIP 105565 / TT01) (Photorhabdus luminescens subsp. laumondii)).